Reading from the N-terminus, the 317-residue chain is Transaldolase (317 aa).

Lys126 serves as the catalytic Schiff-base intermediate with substrate.

It belongs to the transaldolase family. Type 1 subfamily. In terms of assembly, homodimer.

The protein resides in the cytoplasm. It carries out the reaction D-sedoheptulose 7-phosphate + D-glyceraldehyde 3-phosphate = D-erythrose 4-phosphate + beta-D-fructose 6-phosphate. It functions in the pathway carbohydrate degradation; pentose phosphate pathway; D-glyceraldehyde 3-phosphate and beta-D-fructose 6-phosphate from D-ribose 5-phosphate and D-xylulose 5-phosphate (non-oxidative stage): step 2/3. Its function is as follows. Transaldolase is important for the balance of metabolites in the pentose-phosphate pathway. This Burkholderia ambifaria (strain ATCC BAA-244 / DSM 16087 / CCUG 44356 / LMG 19182 / AMMD) (Burkholderia cepacia (strain AMMD)) protein is Transaldolase.